Reading from the N-terminus, the 866-residue chain is Protein SEY1 (866 aa).

The Cytoplasmic segment spans residues 1–746; it reads MVSNGHFAYA…KRSAIGGMTQ (746 aa). In terms of domain architecture, GB1/RHD3-type G spans 48–305; that stretch reads GFNYHLISVF…IPADGFAVYA (258 aa). 58–65 is a binding site for GTP; sequence GSQSTGKS. The stretch at 480–506 forms a coiled coil; the sequence is SNYTQELALYQKDLEKISAQLRKDEMR. A helical membrane pass occupies residues 747 to 767; that stretch reads IPVYFYILLLALGWNEIIAVL. Residues 768 to 770 are Lumenal-facing; the sequence is RNP. The chain crosses the membrane as a helical span at residues 771–791; the sequence is VYFFMLFLCSVAAYIIYQLNL. At 792–866 the chain is on the cytoplasmic side; that stretch reads WGPMVKMAEA…DDEVEGEETW (75 aa). Positions 840–866 are disordered; sequence SHVRSGRNATKINERDDDDEVEGEETW. A compositionally biased stretch (acidic residues) spans 854-866; sequence RDDDDEVEGEETW.

Belongs to the TRAFAC class dynamin-like GTPase superfamily. GB1/RHD3 GTPase family. RHD3 subfamily.

The protein localises to the endoplasmic reticulum membrane. Its function is as follows. Cooperates with the reticulon proteins and tubule-shaping DP1 family proteins to generate and maintain the structure of the tubular endoplasmic reticulum network. Has GTPase activity, which is required for its function in ER organization. The protein is Protein SEY1 of Coccidioides immitis (strain RS) (Valley fever fungus).